Here is a 155-residue protein sequence, read N- to C-terminus: MGKEFSGVLNGQGLKVALVVSRFNEFITSKLLSGAKDSLERHGVSADNTDVAWVPGAFEIPLVAQKLAKSGRYDAVICLGAVIRGSTPHFEYVSSEVSKGIARVGLDASLPVIFGVITADSIEQAIERAGTKMGNKGFDAATQAIEVANLMKNLG.

5-amino-6-(D-ribitylamino)uracil is bound by residues F23, 57–59 (AFE), and 81–83 (AVI). 86–87 (ST) lines the (2S)-2-hydroxy-3-oxobutyl phosphate pocket. The Proton donor role is filled by H89. F114 contacts 5-amino-6-(D-ribitylamino)uracil. R128 contributes to the (2S)-2-hydroxy-3-oxobutyl phosphate binding site.

It belongs to the DMRL synthase family.

It catalyses the reaction (2S)-2-hydroxy-3-oxobutyl phosphate + 5-amino-6-(D-ribitylamino)uracil = 6,7-dimethyl-8-(1-D-ribityl)lumazine + phosphate + 2 H2O + H(+). The protein operates within cofactor biosynthesis; riboflavin biosynthesis; riboflavin from 2-hydroxy-3-oxobutyl phosphate and 5-amino-6-(D-ribitylamino)uracil: step 1/2. Its function is as follows. Catalyzes the formation of 6,7-dimethyl-8-ribityllumazine by condensation of 5-amino-6-(D-ribitylamino)uracil with 3,4-dihydroxy-2-butanone 4-phosphate. This is the penultimate step in the biosynthesis of riboflavin. The sequence is that of 6,7-dimethyl-8-ribityllumazine synthase from Dehalococcoides mccartyi (strain ATCC BAA-2266 / KCTC 15142 / 195) (Dehalococcoides ethenogenes (strain 195)).